Here is a 129-residue protein sequence, read N- to C-terminus: Small ribosomal subunit protein uS11 (129 aa).

This sequence belongs to the universal ribosomal protein uS11 family. In terms of assembly, part of the 30S ribosomal subunit. Interacts with proteins S7 and S18. Binds to IF-3.

Located on the platform of the 30S subunit, it bridges several disparate RNA helices of the 16S rRNA. Forms part of the Shine-Dalgarno cleft in the 70S ribosome. The polypeptide is Small ribosomal subunit protein uS11 (Nitrosomonas europaea (strain ATCC 19718 / CIP 103999 / KCTC 2705 / NBRC 14298)).